The chain runs to 117 residues: Large ribosomal subunit protein uL18 (117 aa).

This sequence belongs to the universal ribosomal protein uL18 family. Part of the 50S ribosomal subunit; part of the 5S rRNA/L5/L18/L25 subcomplex. Contacts the 5S and 23S rRNAs.

This is one of the proteins that bind and probably mediate the attachment of the 5S RNA into the large ribosomal subunit, where it forms part of the central protuberance. The protein is Large ribosomal subunit protein uL18 of Thioalkalivibrio sulfidiphilus (strain HL-EbGR7).